A 310-amino-acid polypeptide reads, in one-letter code: tRNA uridine(34) hydroxylase (310 aa).

Residues 134 to 232 (DDPDTLLIDT…YFEEVSQTES (99 aa)) form the Rhodanese domain. Cysteine 192 acts as the Cysteine persulfide intermediate in catalysis.

This sequence belongs to the TrhO family.

The enzyme catalyses uridine(34) in tRNA + AH2 + O2 = 5-hydroxyuridine(34) in tRNA + A + H2O. Its function is as follows. Catalyzes oxygen-dependent 5-hydroxyuridine (ho5U) modification at position 34 in tRNAs. In Prochlorococcus marinus (strain MIT 9313), this protein is tRNA uridine(34) hydroxylase.